Consider the following 2084-residue polypeptide: RNA-directed RNA polymerase L (2084 aa).

The endonuclease stretch occupies residues 20–221; that stretch reads EPGLYDQIYD…IELQKSEEEL (202 aa). H80, D112, and E126 together coordinate Mn(2+). The active-site For endonuclease activity is the K145. Positions 969–1172 constitute a RdRp catalytic domain; the sequence is SARSLGPGSI…FGIYSSEKST (204 aa). D1127 lines the Mg(2+) pocket. Positions 1695 to 1810 are cap-binding; that stretch reads AQSGTLGGFS…TDGCPVRIME (116 aa).

Belongs to the Bunyavirales RNA polymerase family. Homomultimer. Interacts with the glycoprotein N; this interaction allows efficient polymerase packaging into virus particles. Interacts with nucleoprotein N. It depends on Mn(2+) as a cofactor. Requires Mg(2+) as cofactor.

Its subcellular location is the host Golgi apparatus. The protein localises to the host endoplasmic reticulum. It localises to the host endoplasmic reticulum-Golgi intermediate compartment. The protein resides in the virion. It carries out the reaction RNA(n) + a ribonucleoside 5'-triphosphate = RNA(n+1) + diphosphate. Its activity is regulated as follows. Inhibited by Baloxavir acid (BXA). Its function is as follows. RNA-dependent RNA polymerase, which is responsible for the replication and transcription of the viral RNA genome using antigenomic RNA as an intermediate. During transcription, synthesizes subgenomic RNAs and assures their capping by a cap-snatching mechanism, which involves the endonuclease activity cleaving the host capped pre-mRNAs. These short capped RNAs are then used as primers for viral transcription. The 3'-end of subgenomic mRNAs molecules are not polyadenylated. During replication, the polymerase binds the 5' and 3' vRNA extremities at distinct sites. In turn, significant conformational changes occur in the polymerase and in vRNA to initiate active RNA synthesis. As a consequence of the use of the same enzyme for both transcription and replication, these mechanisms need to be well coordinated. In Dabie bandavirus (Severe fever with thrombocytopenia virus), this protein is RNA-directed RNA polymerase L.